We begin with the raw amino-acid sequence, 327 residues long: Quinone oxidoreductase 1 (327 aa).

NADP(+) contacts are provided by residues 42–46 (FIDTY), Tyr130, 152–153 (GV), 173–177 (GTAQK), Tyr192, Ser216, 238–241 (FGNS), 264–266 (PSL), and Arg317.

This sequence belongs to the zinc-containing alcohol dehydrogenase family. Quinone oxidoreductase subfamily. Homodimer.

It catalyses the reaction 2 a quinone + NADPH + H(+) = 2 a 1,4-benzosemiquinone + NADP(+). The protein is Quinone oxidoreductase 1 (qorA) of Escherichia coli (strain K12).